The primary structure comprises 218 residues: Thiopurine S-methyltransferase (218 aa).

S-adenosyl-L-methionine is bound by residues Trp10, Leu45, Glu66, and Arg123.

This sequence belongs to the class I-like SAM-binding methyltransferase superfamily. TPMT family.

Its subcellular location is the cytoplasm. The enzyme catalyses S-adenosyl-L-methionine + a thiopurine = S-adenosyl-L-homocysteine + a thiopurine S-methylether.. This chain is Thiopurine S-methyltransferase, found in Pseudomonas aeruginosa (strain ATCC 15692 / DSM 22644 / CIP 104116 / JCM 14847 / LMG 12228 / 1C / PRS 101 / PAO1).